We begin with the raw amino-acid sequence, 356 residues long: MRYAIFDESNLERVLKAIGEASPEFRRFRYVELLAKSEKGVVGKYRSLYFLFSKEPFELDVEPIEIFEVEIEKDDGNFRSFRFGKYSLRDKLLLDCNFNEKLFYDYLPALLCEISSARLLIKDCNLRASHLAERESEIVKEITKISEDVKTLSIEKLEELSFEVSALRASFFSSYMLFKDDVEEIFSSIARASSISNFLGGLLKEQIDELRNQLETISYFESRFEQTLSGVRDALDVVHLRLEMLRGKENLELQKRTSALQAAAAVIEFVAVFYYSMKIWEAFLPVTEMPHWLSFSLLAAFTFTVVVYTEALGDYIRERKPSSKLVLLTLTLAILVILMATLPTLFSAASQLSGGH.

Helical transmembrane passes span Ser-258–Tyr-275, Pro-290–Leu-312, and Leu-325–Ser-347.

The protein resides in the cell membrane. This is an uncharacterized protein from Archaeoglobus fulgidus (strain ATCC 49558 / DSM 4304 / JCM 9628 / NBRC 100126 / VC-16).